The primary structure comprises 222 residues: Cytochrome b6-f complex iron-sulfur subunit, chloroplastic (222 aa).

Residues 1 to 49 (MASTALSTASNPTQLCRTRASSLCKPVKGLGFGRERIPRNITCMAGSIS) constitute a chloroplast transit peptide. Residues 66 to 86 (LLGAISLPTFGMLVPYGSFLV) traverse the membrane as a helical segment. One can recognise a Rieske domain in the interval 109–205 (VEDWLKTHGP…ADVDDGKVVF (97 aa)). Cys-151, His-153, Cys-169, and His-172 together coordinate [2Fe-2S] cluster. The cysteines at positions 156 and 171 are disulfide-linked.

Belongs to the Rieske iron-sulfur protein family. As to quaternary structure, the 4 large subunits of the cytochrome b6-f complex are cytochrome b6, subunit IV (17 kDa polypeptide, petD), cytochrome f and the Rieske protein, while the 4 small subunits are petG, petL, petM and petN. The complex functions as a dimer. Requires [2Fe-2S] cluster as cofactor.

Its subcellular location is the plastid. The protein resides in the chloroplast thylakoid membrane. The enzyme catalyses 2 oxidized [plastocyanin] + a plastoquinol + 2 H(+)(in) = 2 reduced [plastocyanin] + a plastoquinone + 4 H(+)(out). Component of the cytochrome b6-f complex, which mediates electron transfer between photosystem II (PSII) and photosystem I (PSI), cyclic electron flow around PSI, and state transitions. This Triticum aestivum (Wheat) protein is Cytochrome b6-f complex iron-sulfur subunit, chloroplastic (petC).